The chain runs to 185 residues: Protein PBP4 (185 aa).

Composition is skewed to low complexity over residues 1 to 24 (MTTT…LSAS) and 46 to 62 (AQAA…QQQQ). Disordered stretches follow at residues 1-116 (MTTT…YNRE) and 147-168 (ETAS…SKNK). Composition is skewed to polar residues over residues 73–83 (PANTKTKTIAS), 91–102 (KGSSTANGSSTN), and 147–166 (ETAS…SSSK).

As to quaternary structure, interacts with IGO1, LSM12 and PBP1.

Its subcellular location is the cytoplasm. The protein resides in the nucleus. The protein is Protein PBP4 (PBP4) of Saccharomyces cerevisiae (strain ATCC 204508 / S288c) (Baker's yeast).